We begin with the raw amino-acid sequence, 385 residues long: Arginine biosynthesis bifunctional protein ArgJ (385 aa).

Residues Thr-142, Lys-168, Thr-179, Glu-259, Asn-380, and Thr-385 each coordinate substrate. The active-site Nucleophile is the Thr-179.

It belongs to the ArgJ family. Heterotetramer of two alpha and two beta chains.

The protein localises to the cytoplasm. The enzyme catalyses N(2)-acetyl-L-ornithine + L-glutamate = N-acetyl-L-glutamate + L-ornithine. It carries out the reaction L-glutamate + acetyl-CoA = N-acetyl-L-glutamate + CoA + H(+). Its pathway is amino-acid biosynthesis; L-arginine biosynthesis; L-ornithine and N-acetyl-L-glutamate from L-glutamate and N(2)-acetyl-L-ornithine (cyclic): step 1/1. The protein operates within amino-acid biosynthesis; L-arginine biosynthesis; N(2)-acetyl-L-ornithine from L-glutamate: step 1/4. Its function is as follows. Catalyzes two activities which are involved in the cyclic version of arginine biosynthesis: the synthesis of N-acetylglutamate from glutamate and acetyl-CoA as the acetyl donor, and of ornithine by transacetylation between N(2)-acetylornithine and glutamate. This Leptospira interrogans serogroup Icterohaemorrhagiae serovar copenhageni (strain Fiocruz L1-130) protein is Arginine biosynthesis bifunctional protein ArgJ.